We begin with the raw amino-acid sequence, 362 residues long: Putative F-box protein At3g23260 (362 aa).

The F-box domain occupies 1-46 (MEWRSLPVELQEEILSRVPAKYLARLRSTSKQWNALSKTGSFAKKH).

The polypeptide is Putative F-box protein At3g23260 (Arabidopsis thaliana (Mouse-ear cress)).